The chain runs to 1365 residues: Glucosyltransferase-S (1365 aa).

Residues Met1–Ala36 constitute a signal peptide (or 37). 2 stretches are compositionally biased toward polar residues: residues Asp80 to Pro89 and Arg127 to Gln146. Disordered regions lie at residues Asp80–Val99 and Arg127–Thr152. Cell wall-binding repeat units follow at residues Gln146–Arg166 and Lys168–Glu187. Positions Gln200 to Thr1000 are catalytic; approximate. 10 Cell wall-binding repeats span residues Ala1052–Glu1071, Lys1073–Met1092, Ala1093–Gln1112, Leu1113–Thr1133, Asn1136–Ile1159, Ala1160–Gln1179, Leu1234–Gln1253, Gly1278–Val1298, Leu1299–Gln1318, and Arg1343–Ala1362.

The protein belongs to the glycosyl hydrolase 70 family.

The catalysed reaction is [(1-&gt;6)-alpha-D-glucosyl](n) + sucrose = [(1-&gt;6)-alpha-D-glucosyl](n+1) + D-fructose. Glucan synthesis by GTF-S is independent of primer glucan unlike GTF-I. Functionally, production of extracellular glucans, that are thought to play a key role in the development of the dental plaque because of their ability to adhere to smooth surfaces and mediate the aggregation of bacterial cells and food debris. The sequence is that of Glucosyltransferase-S (gtfS) from Streptococcus downei (Streptococcus sobrinus).